Consider the following 34-residue polypeptide: Peptide 9797 (34 aa).

Expressed by the venom gland.

Its subcellular location is the secreted. This Tityus stigmurus (Brazilian scorpion) protein is Peptide 9797.